A 555-amino-acid chain; its full sequence is Beta-fructofuranosidase, cell wall isozyme (555 aa).

The signal sequence occupies residues 1-22 (MAISSIFLLSLFSLIYVIPIEA). Substrate contacts are provided by residues 58-61 (WIND), Gln77, Trp85, and 120-121 (WS). Asp61 is an active-site residue. Residue Asp140 is part of the active site. N-linked (GlcNAc...) asparagine glycosylation is found at Asn154 and Asn181. Substrate is bound by residues 186-187 (RD), Glu241, and Asp277. N-linked (GlcNAc...) asparagine glycosylation is present at Asn337. A disulfide bridge links Cys435 with Cys481.

The protein belongs to the glycosyl hydrolase 32 family.

It carries out the reaction Hydrolysis of terminal non-reducing beta-D-fructofuranoside residues in beta-D-fructofuranosides.. This is Beta-fructofuranosidase, cell wall isozyme (BFRUCT1) from Pisum sativum (Garden pea).